The primary structure comprises 140 residues: Ribosome maturation factor RimP (140 aa).

It belongs to the RimP family.

Its subcellular location is the cytoplasm. Functionally, required for maturation of 30S ribosomal subunits. The chain is Ribosome maturation factor RimP from Campylobacter jejuni subsp. jejuni serotype O:2 (strain ATCC 700819 / NCTC 11168).